A 214-amino-acid chain; its full sequence is uncharacterized protein (214 aa).

Residues Lys-39–Asn-68 adopt a coiled-coil conformation. Residues Glu-99–Asp-114 show a composition bias toward basic and acidic residues. The interval Glu-99–Asp-162 is disordered. The segment covering Ser-123–Asp-162 has biased composition (acidic residues). Residues Leu-138–Gly-212 are a coiled coil.

This is an uncharacterized protein from Archaeoglobus fulgidus (strain ATCC 49558 / DSM 4304 / JCM 9628 / NBRC 100126 / VC-16).